Reading from the N-terminus, the 347-residue chain is 4-hydroxyproline 2-epimerase (347 aa).

Gln85 contacts substrate. The active-site Proton acceptor is the Ser93. Substrate is bound by residues 94 to 95 (GS) and Asp251. The active-site Proton donor is the Cys255. Residue 256-257 (GT) coordinates substrate.

The protein belongs to the proline racemase family.

The catalysed reaction is trans-4-hydroxy-L-proline = cis-4-hydroxy-D-proline. In terms of biological role, catalyzes the epimerization of trans-4-hydroxy-L-proline (t4LHyp) to cis-4-hydroxy-D-proline (c4DHyp). May be involved in a degradation pathway of t4LHyp. Can also catalyze the epimerization of trans-3-hydroxy-L-proline (t3LHyp) to cis-3-hydroxy-D-proline (c3DHyp) in vitro. Displays no proline racemase activity. The protein is 4-hydroxyproline 2-epimerase of Allorhizobium ampelinum (strain ATCC BAA-846 / DSM 112012 / S4) (Agrobacterium vitis (strain S4)).